Reading from the N-terminus, the 237-residue chain is MADETNLEGVAAVEATGGEPQREGRGRGRGRGGNDRGGERGGRGRRDDRRGRGNNDEEGGEELIEKLVHINRVSKTVKGGKRFGFAALVVVGDGKGRAGFGKGKAREVPEAITKATAAAKRAMVRVPLKEGRTLHHDGKGRFGAGKVNVRSAPAGTGIIAGGPMRAVFESLGVSDVVTKSVGTSNPYNMIRATFDALTDQTSPKSVAQRRGKKVADLLGRGGASQVEAEAAAEAIAE.

Residues 1–59 are disordered; that stretch reads MADETNLEGVAAVEATGGEPQREGRGRGRGRGGNDRGGERGGRGRRDDRRGRGNNDEEG. Over residues 20–55 the composition is skewed to basic and acidic residues; that stretch reads PQREGRGRGRGRGGNDRGGERGGRGRRDDRRGRGNN. The S5 DRBM domain occupies 63 to 126; the sequence is LIEKLVHINR…AAAKRAMVRV (64 aa).

The protein belongs to the universal ribosomal protein uS5 family. As to quaternary structure, part of the 30S ribosomal subunit. Contacts proteins S4 and S8.

Functionally, with S4 and S12 plays an important role in translational accuracy. In terms of biological role, located at the back of the 30S subunit body where it stabilizes the conformation of the head with respect to the body. The chain is Small ribosomal subunit protein uS5 from Novosphingobium aromaticivorans (strain ATCC 700278 / DSM 12444 / CCUG 56034 / CIP 105152 / NBRC 16084 / F199).